Reading from the N-terminus, the 246-residue chain is Thaumatin-like protein 1a (246 aa).

The signal sequence occupies residues Met-1–Ala-24. 8 disulfides stabilise this stretch: Cys-33–Cys-245, Cys-81–Cys-91, Cys-96–Cys-103, Cys-151–Cys-234, Cys-156–Cys-217, Cys-164–Cys-180, Cys-184–Cys-193, and Cys-194–Cys-204.

The protein belongs to the thaumatin family.

The protein localises to the secreted. This chain is Thaumatin-like protein 1a (TL1), found in Malus domestica (Apple).